Reading from the N-terminus, the 135-residue chain is Transcriptional regulator HosA (135 aa).

Positions Arg4 to Asn134 constitute an HTH marR-type domain. The segment at residues Gln48 to Asn71 is a DNA-binding region (H-T-H motif).

Involved in the temperature-dependent positive control of flagellum-driven swimming motility and cellular aggregation. Regulates fliC expression by directly interacting with fliC promoter. This chain is Transcriptional regulator HosA (hosA), found in Escherichia coli O157:H7.